The chain runs to 1018 residues: Isoleucine--tRNA ligase (1018 aa).

Positions 43–53 match the 'HIGH' region motif; sequence PYTTGRIHLGT. A 'KMSKS' region motif is present at residues 586 to 590; it reads KMSKS. Position 589 (K589) interacts with ATP.

Belongs to the class-I aminoacyl-tRNA synthetase family. IleS type 2 subfamily. As to quaternary structure, monomer. It depends on Zn(2+) as a cofactor.

Its subcellular location is the cytoplasm. The enzyme catalyses tRNA(Ile) + L-isoleucine + ATP = L-isoleucyl-tRNA(Ile) + AMP + diphosphate. Functionally, catalyzes the attachment of isoleucine to tRNA(Ile). As IleRS can inadvertently accommodate and process structurally similar amino acids such as valine, to avoid such errors it has two additional distinct tRNA(Ile)-dependent editing activities. One activity is designated as 'pretransfer' editing and involves the hydrolysis of activated Val-AMP. The other activity is designated 'posttransfer' editing and involves deacylation of mischarged Val-tRNA(Ile). This Archaeoglobus fulgidus (strain ATCC 49558 / DSM 4304 / JCM 9628 / NBRC 100126 / VC-16) protein is Isoleucine--tRNA ligase.